We begin with the raw amino-acid sequence, 529 residues long: Tyrosine--tRNA ligase, cytoplasmic (529 aa).

L-tyrosine is bound at residue Y39. Positions T44–Y52 match the 'HIGH' region motif. Y166, Q170, D173, and Q188 together coordinate L-tyrosine. Positions K222–S226 match the 'KMSKS' region motif. Residues K242 to K247 carry the Nuclear localization signal motif. The interval K335 to D362 is disordered. Residues I365 to Y469 enclose the tRNA-binding domain.

The protein belongs to the class-I aminoacyl-tRNA synthetase family. As to quaternary structure, homodimer.

The protein localises to the cytoplasm. The protein resides in the nucleus. The catalysed reaction is tRNA(Tyr) + L-tyrosine + ATP = L-tyrosyl-tRNA(Tyr) + AMP + diphosphate + H(+). In terms of biological role, catalyzes the attachment of tyrosine to tRNA(Tyr) in a two-step reaction: tyrosine is first activated by ATP to form Tyr-AMP and then transferred to the acceptor end of tRNA(Tyr). This is Tyrosine--tRNA ligase, cytoplasmic (yars1) from Danio rerio (Zebrafish).